Here is a 222-residue protein sequence, read N- to C-terminus: Ribosomal RNA small subunit methyltransferase G (222 aa).

Residues G84, F89, 141 to 142 (VE), and R154 each bind S-adenosyl-L-methionine.

The protein belongs to the methyltransferase superfamily. RNA methyltransferase RsmG family.

Its subcellular location is the cytoplasm. The catalysed reaction is guanosine(527) in 16S rRNA + S-adenosyl-L-methionine = N(7)-methylguanosine(527) in 16S rRNA + S-adenosyl-L-homocysteine. Specifically methylates the N7 position of guanine in position 527 of 16S rRNA. This is Ribosomal RNA small subunit methyltransferase G from Bradyrhizobium sp. (strain BTAi1 / ATCC BAA-1182).